Here is a 179-residue protein sequence, read N- to C-terminus: Large ribosomal subunit protein uL5 (179 aa).

It belongs to the universal ribosomal protein uL5 family. As to quaternary structure, part of the 50S ribosomal subunit; part of the 5S rRNA/L5/L18/L25 subcomplex. Contacts the 5S rRNA and the P site tRNA. Forms a bridge to the 30S subunit in the 70S ribosome.

In terms of biological role, this is one of the proteins that bind and probably mediate the attachment of the 5S RNA into the large ribosomal subunit, where it forms part of the central protuberance. In the 70S ribosome it contacts protein S13 of the 30S subunit (bridge B1b), connecting the 2 subunits; this bridge is implicated in subunit movement. Contacts the P site tRNA; the 5S rRNA and some of its associated proteins might help stabilize positioning of ribosome-bound tRNAs. This chain is Large ribosomal subunit protein uL5, found in Enterococcus faecalis (strain ATCC 700802 / V583).